Reading from the N-terminus, the 304-residue chain is Large ribosomal subunit protein uL2m (304 aa).

The transit peptide at 1–60 (MALCALASALRSLSLASPAITARVPTLLPVGQSNVLLQLPSALALPAHRPVHMSADRSAK) directs the protein to the mitochondrion.

It belongs to the universal ribosomal protein uL2 family. Component of the mitochondrial ribosome large subunit (39S) which comprises a 16S rRNA and about 50 distinct proteins.

Its subcellular location is the mitochondrion. This chain is Large ribosomal subunit protein uL2m (Mrpl2), found in Rattus norvegicus (Rat).